The following is a 65-amino-acid chain: Conotoxin TsMRCL-04 (65 aa).

The first 20 residues, 1 to 20 (MRCLPVFIILLLLIPSAASA), serve as a signal peptide directing secretion. Residues 21–48 (AQPETKDDAALASFYDNAKRTLQRHWAK) constitute a propeptide that is removed on maturation. At Glu63 the chain carries Glutamic acid 1-amide.

It belongs to the conotoxin T superfamily. In terms of processing, contains 2 disulfide bonds that can be either 'C1-C3, C2-C4' or 'C1-C4, C2-C3', since these disulfide connectivities have been observed for conotoxins with cysteine framework V (for examples, see AC P0DQQ7 and AC P81755). As to expression, expressed by the venom duct.

It is found in the secreted. This is Conotoxin TsMRCL-04 from Conus tessulatus (Tessellate cone).